Consider the following 200-residue polypeptide: 3-isopropylmalate dehydratase small subunit (200 aa).

It belongs to the LeuD family. LeuD type 1 subfamily. As to quaternary structure, heterodimer of LeuC and LeuD.

The enzyme catalyses (2R,3S)-3-isopropylmalate = (2S)-2-isopropylmalate. The protein operates within amino-acid biosynthesis; L-leucine biosynthesis; L-leucine from 3-methyl-2-oxobutanoate: step 2/4. Catalyzes the isomerization between 2-isopropylmalate and 3-isopropylmalate, via the formation of 2-isopropylmaleate. This chain is 3-isopropylmalate dehydratase small subunit, found in Aliivibrio salmonicida (strain LFI1238) (Vibrio salmonicida (strain LFI1238)).